We begin with the raw amino-acid sequence, 843 residues long: Leucine--tRNA ligase (843 aa).

The short motif at 61-71 (PYPSGDLHMGH) is the 'HIGH' region element. Positions 606–610 (AMSKS) match the 'KMSKS' region motif. Lys609 contacts ATP.

Belongs to the class-I aminoacyl-tRNA synthetase family.

The protein localises to the cytoplasm. The catalysed reaction is tRNA(Leu) + L-leucine + ATP = L-leucyl-tRNA(Leu) + AMP + diphosphate. This is Leucine--tRNA ligase from Arthrobacter sp. (strain FB24).